A 605-amino-acid chain; its full sequence is Probable potassium transport system protein Kup 1 (605 aa).

The next 12 helical transmembrane spans lie at 16-36 (ALGL…TVIF), 46-66 (VFGI…MEYA), 97-117 (VAFA…DGVI), 138-158 (GLST…LFSV), 166-186 (VAGA…VTGV), 212-232 (GLAG…GEAL), 248-268 (WYFV…FAIT), 287-307 (LYIP…QSII), 339-359 (IYLG…MLLF), 368-388 (AYGM…IIVF), 397-417 (ALVA…TFSK), and 418-438 (IPHG…TIII).

The protein belongs to the HAK/KUP transporter (TC 2.A.72) family.

It is found in the cell inner membrane. The catalysed reaction is K(+)(in) + H(+)(in) = K(+)(out) + H(+)(out). Its function is as follows. Transport of potassium into the cell. Likely operates as a K(+):H(+) symporter. The chain is Probable potassium transport system protein Kup 1 from Geobacter metallireducens (strain ATCC 53774 / DSM 7210 / GS-15).